A 164-amino-acid polypeptide reads, in one-letter code: Thiol peroxidase (164 aa).

Positions 16–162 constitute a Thioredoxin domain; it reads LQVGDIAKDF…YEAAINAAKI (147 aa). The active-site Cysteine sulfenic acid (-SOH) intermediate is the Cys58. Residues Cys58 and Cys92 are joined by a disulfide bond.

It belongs to the peroxiredoxin family. Tpx subfamily. As to quaternary structure, homodimer.

It catalyses the reaction a hydroperoxide + [thioredoxin]-dithiol = an alcohol + [thioredoxin]-disulfide + H2O. In terms of biological role, thiol-specific peroxidase that catalyzes the reduction of hydrogen peroxide and organic hydroperoxides to water and alcohols, respectively. Plays a role in cell protection against oxidative stress by detoxifying peroxides. This is Thiol peroxidase from Streptococcus agalactiae serotype V (strain ATCC BAA-611 / 2603 V/R).